We begin with the raw amino-acid sequence, 84 residues long: CDC42 small effector protein 2-A (84 aa).

Residues Cys-10 and Cys-11 are each lipidated (S-palmitoyl cysteine). The CRIB domain maps to 29–42 (IGEPTNFVHTAHVG).

It belongs to the CDC42SE/SPEC family.

The protein resides in the cytoplasm. It is found in the cytoskeleton. It localises to the cell membrane. In terms of biological role, probably involved in the organization of the actin cytoskeleton by acting downstream of CDC42, inducing actin filament assembly. The protein is CDC42 small effector protein 2-A (cdc42se2-A) of Xenopus tropicalis (Western clawed frog).